A 578-amino-acid polypeptide reads, in one-letter code: Protein RIK (578 aa).

A disordered region spans residues 1–34; the sequence is MTEDNDEARVPLSDSSTTNDASRTRQRRKRKWDK. Residues 206-273 form the KH domain; it reads SSNVAARIRG…KSIDDAKRLA (68 aa). Polar residues predominate over residues 413-425; sequence ATSLSIPSDNASN. The tract at residues 413–578 is disordered; it reads ATSLSIPSDN…DPDEPLTTRS (166 aa). Over residues 472–492 the composition is skewed to pro residues; that stretch reads PPSPRSVMPPPPPKTIAPPPS. 2 stretches are compositionally biased toward low complexity: residues 493 to 503 and 510 to 521; these read KTMSPPSSKSM and SKTMSPLSSKSM. Residues 560-572 are compositionally biased toward acidic residues; it reads YGDDEDDDDDPDE.

In terms of assembly, interacts with AS1. Expressed in vegetative tissues.

The protein localises to the nucleus. This is Protein RIK (RIK) from Arabidopsis thaliana (Mouse-ear cress).